A 357-amino-acid polypeptide reads, in one-letter code: MSTRRDLPQSPYLAAVTGRKPSRVPVWFMRQAGRSLPEYRALRERYSMLAACFEPDVACEITLQPIRRYDVDAAILFSDIVVPLRAAGVDLDIVADVGPVIADPVRTAADVAAMKPLDPQAIQPVLVAASLLVAELGDVPLIGFAGAPFTLASYLVEGGPSRHHAHVKAMMLAEPASWHALMAKLTDLTIAFLVGQIDAGVDAIQVFDSWAGALSPIDYRQYVLPHSARVFAALGEHGVPMTHFGVGTAELLGAMSEAVTAGERPGRGAVVGVDWRTPLTDAAARVVPGTALQGNLDPAVVLAGWPAVERAARAVVDDGRRAVDAGAAGHIFNLGHGVLPESDPAVLADLVSLVHSL.

Residues 30–34 (RQAGR), D79, Y154, S209, and H336 each bind substrate.

This sequence belongs to the uroporphyrinogen decarboxylase family. As to quaternary structure, homodimer.

The protein localises to the cytoplasm. The catalysed reaction is uroporphyrinogen III + 4 H(+) = coproporphyrinogen III + 4 CO2. It participates in porphyrin-containing compound metabolism; protoporphyrin-IX biosynthesis; coproporphyrinogen-III from 5-aminolevulinate: step 4/4. Functionally, catalyzes the decarboxylation of four acetate groups of uroporphyrinogen-III to yield coproporphyrinogen-III. This Mycobacterium bovis (strain ATCC BAA-935 / AF2122/97) protein is Uroporphyrinogen decarboxylase.